The sequence spans 63 residues: Iota-crystallin (63 aa).

The protein belongs to the calycin superfamily. Fatty-acid binding protein (FABP) family.

Functionally, binds vitamin A2 in the eye lens and thus functions as a UV filter. Intracellular transport of retinol. The chain is Iota-crystallin (CRBPI) from Gonatodes vittatus (Wiegmann's striped gecko).